The chain runs to 182 residues: Translation initiation factor IF-3, chloroplastic (182 aa).

It belongs to the IF-3 family. In terms of assembly, monomer.

The protein localises to the plastid. Its subcellular location is the chloroplast. Its function is as follows. IF-3 binds to the 30S ribosomal subunit and shifts the equilibrium between 70S ribosomes and their 50S and 30S subunits in favor of the free subunits, thus enhancing the availability of 30S subunits on which protein synthesis initiation begins. The protein is Translation initiation factor IF-3, chloroplastic of Porphyra purpurea (Red seaweed).